Consider the following 3974-residue polypeptide: Hybrid PKS-NRPS synthetase 1 (3974 aa).

A Ketosynthase family 3 (KS3) domain is found at 5 to 442 (SQKIAIIGSA…GTNAHCLIES (438 aa)). Active-site for beta-ketoacyl synthase activity residues include C179, H316, and H362. A malonyl-CoA:ACP transacylase (MAT) domain region spans residues 561-883 (IFTGQGAQWA…TGILERGLDD (323 aa)). The tract at residues 954-1079 (HPLLGSRLSA…HDSELGIPES (126 aa)) is N-terminal hotdog fold. The segment at 954 to 1251 (HPLLGSRLSA…QVESVKLVPV (298 aa)) is dehydratase (DH) domain. The region spanning 954–1257 (HPLLGSRLSA…LVPVITPDAS (304 aa)) is the PKS/mFAS DH domain. Catalysis depends on H986, which acts as the Proton acceptor; for dehydratase activity. The interval 1107–1257 (TTPISSAKIY…LVPVITPDAS (151 aa)) is C-terminal hotdog fold. D1165 serves as the catalytic Proton donor; for dehydratase activity. Positions 1398-1529 (PWNTELRNAI…GYLLLVAKTG (132 aa)) are methyltransferase (MT) domain. A ketoreductase (KR) domain region spans residues 2108–2282 (TYFLAGMTDS…ASIMDTGVVT (175 aa)). Positions 2492 to 2516 (AGRSASPGASCSDRSLSTRSDETRS) are disordered. Positions 2498–2509 (PGASCSDRSLST) are enriched in polar residues. Positions 2560–2994 (APLSPGQAQL…LERLRTSSDQ (435 aa)) are condensation (C) domain. The tract at residues 3021 to 3423 (DAMAEKYFDQ…DGSLILLGRM (403 aa)) is adenylation (A) (KR) domain. The Carrier domain maps to 3537–3613 (SADQLVEAEV…EMAEKMASVR (77 aa)). The residue at position 3573 (S3573) is an O-(pantetheine 4'-phosphoryl)serine. Residues 3657-3940 (VVLTGAADLL…KLEMGEWIAL (284 aa)) are reductase (RED) domain.

In the C-terminal section; belongs to the NRP synthetase family.

Its pathway is secondary metabolite biosynthesis. Functionally, hybrid PKS-NRPS synthetase; part of the hps1-dma1 gene cluster that probably mediates the biosynthesis a derivative of cyclopiazonic acid (CPA). The hybrid polyketide synthase-nonribosomal peptide synthetase (PKS-NRPS) nps1 might incorporates acetyl-CoA, malonyl-CoA, and tryptophan (Trp) and utilizes a C-terminal redox-incompetent reductase domain to make and release the tryptophan tetramic acid, cyclo-acetoacetyl-L-tryptophan (c-AATrp), as the first intermediate in the pathway. In addition, the cluster also includes the tryptophan dimethylallyltransferase dma1, the FAD-dependent oxidoreductase toxD, the cytochrome P450 monooxygenase cyp3.1 and the methyltransferase DOTSEDRAFT_139328; the latter 2 being not present in all CPA-producing fungi but involved in additional modifications that occur in biosynthesis the of a range of CPA and CPA-like products. Further studies are required to clarify whether the CPA-like hps1-dma1 cluster is functional or a non-functional relic reflecting evolution of D.septosporum. The chain is Hybrid PKS-NRPS synthetase 1 from Dothistroma septosporum (strain NZE10 / CBS 128990) (Red band needle blight fungus).